The chain runs to 352 residues: Ion-translocating oxidoreductase complex subunit D (352 aa).

4 consecutive transmembrane segments (helical) span residues 20–40 (IMLLVLIAALPGIAAQTWFFG), 42–62 (GTLFQIVLAAITALVAEAIVL), 69–91 (VASHLQDYSALLTGLLLAVSIPP), and 123–143 (PAMIGYVVLLISFPVQMTSWL). Residue Thr187 is modified to FMN phosphoryl threonine. The next 5 helical transmembrane spans lie at 215 to 235 (LAGVGWQWVNLAWLVGGVFLL), 242 to 262 (WHIPVSFLLTLALCAALGWLF), 267 to 287 (LASPQLHLLSGATMLGAFFIL), 301 to 321 (LIFGALAGVLVWLIRSFGGYP), and 322 to 342 (DGVAFAVLLANITVPLIDYYT).

This sequence belongs to the NqrB/RnfD family. In terms of assembly, the complex is composed of six subunits: RsxA, RsxB, RsxC, RsxD, RsxE and RsxG. FMN is required as a cofactor.

The protein resides in the cell inner membrane. In terms of biological role, part of a membrane-bound complex that couples electron transfer with translocation of ions across the membrane. Required to maintain the reduced state of SoxR. This Salmonella choleraesuis (strain SC-B67) protein is Ion-translocating oxidoreductase complex subunit D.